A 118-amino-acid chain; its full sequence is Large ribosomal subunit protein bL20c (118 aa).

Belongs to the bacterial ribosomal protein bL20 family.

It is found in the plastid. It localises to the chloroplast. Binds directly to 23S ribosomal RNA and is necessary for the in vitro assembly process of the 50S ribosomal subunit. It is not involved in the protein synthesizing functions of that subunit. This Gracilaria tenuistipitata var. liui (Red alga) protein is Large ribosomal subunit protein bL20c.